The following is a 226-amino-acid chain: Flagellar L-ring protein (226 aa).

Residues 1–15 (MKRLAVSILCLALAG) form the signal peptide. Cysteine 16 carries the N-palmitoyl cysteine lipid modification. Cysteine 16 carries S-diacylglycerol cysteine lipidation.

This sequence belongs to the FlgH family. In terms of assembly, the basal body constitutes a major portion of the flagellar organelle and consists of four rings (L,P,S, and M) mounted on a central rod.

The protein resides in the cell outer membrane. Its subcellular location is the bacterial flagellum basal body. In terms of biological role, assembles around the rod to form the L-ring and probably protects the motor/basal body from shearing forces during rotation. The polypeptide is Flagellar L-ring protein (Geobacter metallireducens (strain ATCC 53774 / DSM 7210 / GS-15)).